A 203-amino-acid chain; its full sequence is High frequency lysogenization protein HflD homolog (203 aa).

Belongs to the HflD family.

It localises to the cytoplasm. The protein resides in the cell inner membrane. In Dichelobacter nodosus (strain VCS1703A), this protein is High frequency lysogenization protein HflD homolog.